We begin with the raw amino-acid sequence, 542 residues long: T-complex protein 1 subunit delta (542 aa).

Low complexity predominate over residues 1 to 16 (MPENVAPRTGPPAGAA). Residues 1-31 (MPENVAPRTGPPAGAAGAAGGRGKSAYQDRD) are disordered. The residue at position 22 (arginine 22) is an Omega-N-methylarginine. At lysine 24 the chain carries N6-acetyllysine. Serine 39 is modified (phosphoserine). Residue glycine 56 coordinates ADP. Glycine 56 is an ATP binding site. Residue aspartate 107 participates in Mg(2+) binding. ADP is bound by residues glycine 108, threonine 109, threonine 110, serine 111, asparagine 175, serine 176, and lysine 177. 2 residues coordinate ATP: glycine 108 and threonine 109. Lysine 177 provides a ligand contact to ATP. Serine 187 and serine 205 each carry phosphoserine. 4 positions are modified to N6-acetyllysine: lysine 291, lysine 305, lysine 322, and lysine 329. Glycine 428 provides a ligand contact to ADP. Residue serine 447 is modified to Phosphoserine. Glutamine 513 lines the ADP pocket.

This sequence belongs to the TCP-1 chaperonin family. In terms of assembly, component of the chaperonin-containing T-complex (TRiC), a hexadecamer composed of two identical back-to-back stacked rings enclosing a protein folding chamber. Each ring is made up of eight different subunits: TCP1/CCT1, CCT2, CCT3, CCT4, CCT5, CCT6A/CCT6, CCT7, CCT8. Interacts with PACRG. Interacts with DNAAF4. Interacts with DLEC1.

Its subcellular location is the cytoplasm. The protein localises to the melanosome. The protein resides in the cytoskeleton. It is found in the microtubule organizing center. It localises to the centrosome. Its subcellular location is the cilium basal body. It carries out the reaction ATP + H2O = ADP + phosphate + H(+). In terms of biological role, component of the chaperonin-containing T-complex (TRiC), a molecular chaperone complex that assists the folding of actin, tubulin and other proteins upon ATP hydrolysis. The TRiC complex mediates the folding of WRAP53/TCAB1, thereby regulating telomere maintenance. As part of the TRiC complex may play a role in the assembly of BBSome, a complex involved in ciliogenesis regulating transports vesicles to the cilia. This chain is T-complex protein 1 subunit delta (CCT4), found in Bos taurus (Bovine).